A 283-amino-acid chain; its full sequence is 4-hydroxy-tetrahydrodipicolinate synthase (283 aa).

Residue Thr46 coordinates pyruvate. Residue Tyr134 is the Proton donor/acceptor of the active site. The active-site Schiff-base intermediate with substrate is the Lys162. Ile208 lines the pyruvate pocket.

Belongs to the DapA family. As to quaternary structure, homotetramer; dimer of dimers.

The protein resides in the cytoplasm. It carries out the reaction L-aspartate 4-semialdehyde + pyruvate = (2S,4S)-4-hydroxy-2,3,4,5-tetrahydrodipicolinate + H2O + H(+). It participates in amino-acid biosynthesis; L-lysine biosynthesis via DAP pathway; (S)-tetrahydrodipicolinate from L-aspartate: step 3/4. In terms of biological role, catalyzes the condensation of (S)-aspartate-beta-semialdehyde [(S)-ASA] and pyruvate to 4-hydroxy-tetrahydrodipicolinate (HTPA). The protein is 4-hydroxy-tetrahydrodipicolinate synthase of Methanothermobacter thermautotrophicus (strain ATCC 29096 / DSM 1053 / JCM 10044 / NBRC 100330 / Delta H) (Methanobacterium thermoautotrophicum).